The sequence spans 393 residues: Formate-dependent phosphoribosylglycinamide formyltransferase (393 aa).

N(1)-(5-phospho-beta-D-ribosyl)glycinamide-binding positions include 22–23 (EL) and E82. ATP-binding positions include R114, K155, 160–165 (SSGHGQ), 195–198 (EGFV), and E203. One can recognise an ATP-grasp domain in the interval 119–308 (RLAAEELGLP…QFALHARAVL (190 aa)). Mg(2+) contacts are provided by E267 and E279. N(1)-(5-phospho-beta-D-ribosyl)glycinamide is bound by residues D286, K356, and 363–364 (RR).

The protein belongs to the PurK/PurT family. In terms of assembly, homodimer.

It catalyses the reaction N(1)-(5-phospho-beta-D-ribosyl)glycinamide + formate + ATP = N(2)-formyl-N(1)-(5-phospho-beta-D-ribosyl)glycinamide + ADP + phosphate + H(+). It functions in the pathway purine metabolism; IMP biosynthesis via de novo pathway; N(2)-formyl-N(1)-(5-phospho-D-ribosyl)glycinamide from N(1)-(5-phospho-D-ribosyl)glycinamide (formate route): step 1/1. Its function is as follows. Involved in the de novo purine biosynthesis. Catalyzes the transfer of formate to 5-phospho-ribosyl-glycinamide (GAR), producing 5-phospho-ribosyl-N-formylglycinamide (FGAR). Formate is provided by PurU via hydrolysis of 10-formyl-tetrahydrofolate. This chain is Formate-dependent phosphoribosylglycinamide formyltransferase, found in Parabacteroides distasonis (strain ATCC 8503 / DSM 20701 / CIP 104284 / JCM 5825 / NCTC 11152).